We begin with the raw amino-acid sequence, 267 residues long: Probable aquaporin TIP3-2 (267 aa).

At Met-1 the chain carries N-acetylmethionine. Ala-2 bears the N-acetylalanine; in Probable aquaporin TIP3-2, N-terminally processed mark. Over 2–26 the chain is Cytoplasmic; that stretch reads ATSARRAYGFGRADEATHPDSIRAT. A helical transmembrane segment spans residues 27–47; the sequence is LAEFLSTFVFVFAGEGSILAL. Topologically, residues 48–66 are vacuolar; the sequence is DKLYWDTAAHTGTNTPGGL. A helical transmembrane segment spans residues 67-87; the sequence is VLVALAHALALFAAVSAAINV. Residues 88–110 are Cytoplasmic-facing; sequence SGGHVNPAVTFAALIGGRISVIR. An NPA 1 motif is present at residues 93–95; sequence NPA. A helical transmembrane segment spans residues 111–131; the sequence is AIYYWVAQLIGAILACLLLRL. Topologically, residues 132-151 are vacuolar; the sequence is ATNGLRPVGFHVASGVSELH. The helical transmembrane segment at 152–172 threads the bilayer; that stretch reads GLLMEIILTFALVYVVYSTAI. The Cytoplasmic segment spans residues 173–178; sequence DPKRGS. Residues 179 to 199 traverse the membrane as a helical segment; that stretch reads IGIIAPLAIGLIVGANILVGG. Residues 200 to 226 are Vacuolar-facing; it reads PFDGASMNPARAFGPALVGWRWSNHWI. Positions 207–209 match the NPA 2 motif; that stretch reads NPA. A helical membrane pass occupies residues 227 to 247; that stretch reads YWVGPFIGGALAALIYEYMII. The Cytoplasmic segment spans residues 248-267; the sequence is PSVNEPPHHSTHQPLAPEDY.

This sequence belongs to the MIP/aquaporin (TC 1.A.8) family. TIP (TC 1.A.8.10) subfamily. Predominantly expressed in developing seeds. Also expressed in rosette leaves.

It localises to the vacuole membrane. Functionally, aquaporins facilitate the transport of water and small neutral solutes across cell membranes. The sequence is that of Probable aquaporin TIP3-2 (TIP3-2) from Arabidopsis thaliana (Mouse-ear cress).